Here is a 435-residue protein sequence, read N- to C-terminus: Enolase (435 aa).

(2R)-2-phosphoglycerate is bound at residue Q163. E205 acts as the Proton donor in catalysis. Residues D243, E292, and D319 each contribute to the Mg(2+) site. (2R)-2-phosphoglycerate contacts are provided by K344, R373, S374, and K395. K344 functions as the Proton acceptor in the catalytic mechanism.

The protein belongs to the enolase family. Requires Mg(2+) as cofactor.

The protein resides in the cytoplasm. The protein localises to the secreted. It localises to the cell surface. The catalysed reaction is (2R)-2-phosphoglycerate = phosphoenolpyruvate + H2O. The protein operates within carbohydrate degradation; glycolysis; pyruvate from D-glyceraldehyde 3-phosphate: step 4/5. In terms of biological role, catalyzes the reversible conversion of 2-phosphoglycerate (2-PG) into phosphoenolpyruvate (PEP). It is essential for the degradation of carbohydrates via glycolysis. This chain is Enolase, found in Streptococcus uberis (strain ATCC BAA-854 / 0140J).